Here is a 333-residue protein sequence, read N- to C-terminus: Biotin synthase (333 aa).

The region spanning 54-283 (FCSNTFDMCS…RAFIRLAGGR (230 aa)) is the Radical SAM core domain. Cys72, Cys76, and Cys79 together coordinate [4Fe-4S] cluster. [2Fe-2S] cluster-binding residues include Ser116, Cys148, Cys208, and Arg278.

This sequence belongs to the radical SAM superfamily. Biotin synthase family. As to quaternary structure, homodimer. It depends on [4Fe-4S] cluster as a cofactor. Requires [2Fe-2S] cluster as cofactor.

It catalyses the reaction (4R,5S)-dethiobiotin + (sulfur carrier)-SH + 2 reduced [2Fe-2S]-[ferredoxin] + 2 S-adenosyl-L-methionine = (sulfur carrier)-H + biotin + 2 5'-deoxyadenosine + 2 L-methionine + 2 oxidized [2Fe-2S]-[ferredoxin]. Its pathway is cofactor biosynthesis; biotin biosynthesis; biotin from 7,8-diaminononanoate: step 2/2. Its function is as follows. Catalyzes the conversion of dethiobiotin (DTB) to biotin by the insertion of a sulfur atom into dethiobiotin via a radical-based mechanism. In Brachyspira hyodysenteriae (strain ATCC 49526 / WA1), this protein is Biotin synthase.